Reading from the N-terminus, the 465-residue chain is Ribulose bisphosphate carboxylase large chain (465 aa).

The residue at position 4 (Lys-4) is an N6,N6,N6-trimethyllysine. Substrate-binding residues include Asn-113 and Thr-163. The Proton acceptor role is filled by Lys-165. Residue Lys-167 coordinates substrate. The Mg(2+) site is built by Lys-191, Asp-193, and Glu-194. Lys-191 is subject to N6-carboxylysine. Residue His-284 is the Proton acceptor of the active site. The substrate site is built by Arg-285, His-317, and Ser-369.

It belongs to the RuBisCO large chain family. Type I subfamily. Heterohexadecamer of 8 large chains and 8 small chains; disulfide-linked. The disulfide link is formed within the large subunit homodimers. Requires Mg(2+) as cofactor. Post-translationally, the disulfide bond which can form in the large chain dimeric partners within the hexadecamer appears to be associated with oxidative stress and protein turnover.

It is found in the plastid. The protein resides in the chloroplast. It carries out the reaction 2 (2R)-3-phosphoglycerate + 2 H(+) = D-ribulose 1,5-bisphosphate + CO2 + H2O. The catalysed reaction is D-ribulose 1,5-bisphosphate + O2 = 2-phosphoglycolate + (2R)-3-phosphoglycerate + 2 H(+). In terms of biological role, ruBisCO catalyzes two reactions: the carboxylation of D-ribulose 1,5-bisphosphate, the primary event in carbon dioxide fixation, as well as the oxidative fragmentation of the pentose substrate in the photorespiration process. Both reactions occur simultaneously and in competition at the same active site. The protein is Ribulose bisphosphate carboxylase large chain of Cassia fistula (Golden shower tree).